The chain runs to 307 residues: Ubiquitin recognition factor in ER-associated degradation protein 1 (307 aa).

M1 bears the N-acetylmethionine mark. Phosphoserine occurs at positions 129, 231, 245, 247, and 299. 2 disordered regions span residues 231–256 (SGNR…DIKR) and 288–307 (GRFV…GRKP).

This sequence belongs to the UFD1 family. As to quaternary structure, heterodimer with NPLOC4, this heterodimer binds VCP and inhibits Golgi membrane fusion. Interacts with USP13. Interacts with ZFAND2B; probably through VCP. In terms of tissue distribution, found in adult heart, skeletal muscle and pancreas, and in fetal liver and kidney.

It is found in the nucleus. Its subcellular location is the cytoplasm. It localises to the cytosol. It participates in protein degradation; proteasomal ubiquitin-dependent pathway. Essential component of the ubiquitin-dependent proteolytic pathway which degrades ubiquitin fusion proteins. The ternary complex containing UFD1, VCP and NPLOC4 binds ubiquitinated proteins and is necessary for the export of misfolded proteins from the ER to the cytoplasm, where they are degraded by the proteasome. The NPLOC4-UFD1-VCP complex regulates spindle disassembly at the end of mitosis and is necessary for the formation of a closed nuclear envelope. It may be involved in the development of some ectoderm-derived structures. Acts as a negative regulator of type I interferon production via the complex formed with VCP and NPLOC4, which binds to RIGI and recruits RNF125 to promote ubiquitination and degradation of RIGI. This is Ubiquitin recognition factor in ER-associated degradation protein 1 from Homo sapiens (Human).